A 928-amino-acid polypeptide reads, in one-letter code: Nitrogen network kinase 1 (928 aa).

Positions 1–12 are enriched in polar residues; sequence MFTSQRQLRQNG. Disordered stretches follow at residues 1-43 and 81-118; these read MFTS…SYGR and HEHPSRSTLVQLQTRSQPDDVASSQVNPEGGTDDLELG. The span at 13-29 shows a compositional bias: low complexity; the sequence is SPMSSSRSSQHSSGTAS. Composition is skewed to polar residues over residues 30 to 40 and 86 to 107; these read PISDSPASNRS and RSTLVQLQTRSQPDDVASSQVN. Residues Ser-178 and Ser-179 each carry the phosphoserine modification. Residues 374 to 394 form a disordered region; the sequence is ANDDNINSRNTPNNSNDTYVN. The segment covering 375–391 has biased composition (low complexity); the sequence is NDDNINSRNTPNNSNDT. Residues Ser-405 and Ser-426 each carry the phosphoserine modification. The Protein kinase domain occupies 449–912; the sequence is HRLGKIIGFG…WKLKRIEEVL (464 aa). ATP-binding positions include 455–463 and Lys-478; that span reads IGFGAWGII. Asp-580 functions as the Proton acceptor in the catalytic mechanism. Disordered regions lie at residues 670-741 and 767-813; these read ENRK…KYIG and YDSP…SGSS. Positions 683-696 are enriched in polar residues; sequence VSSSSHSLKHLNQP. Ser-737 carries the post-translational modification Phosphoserine. Tyr-739 carries the phosphotyrosine modification. The span at 769 to 813 shows a compositional bias: low complexity; it reads SPDSSQSEISAASSSSSNLSSLSSSTKASAVTNSGVTTSSPSGSS.

Belongs to the protein kinase superfamily. Ser/Thr protein kinase family. Interacts with URE2 and GDH2. Also interacts with the TORC1 kinase complex.

It is found in the cytoplasm. The enzyme catalyses L-seryl-[protein] + ATP = O-phospho-L-seryl-[protein] + ADP + H(+). It catalyses the reaction L-threonyl-[protein] + ATP = O-phospho-L-threonyl-[protein] + ADP + H(+). Functionally, serine/threonine-protein kinase involved in the phosphorylation of the NAD(+)-dependent glutamate dehydrogenase GDH2. When overexpressed, confers hypersensitivity to rapamycin and induces rapid nuclear accumulation of GLN3 to activate the transcription of nitrogen-regulated genes. The polypeptide is Nitrogen network kinase 1 (NNK1) (Saccharomyces cerevisiae (strain ATCC 204508 / S288c) (Baker's yeast)).